A 151-amino-acid chain; its full sequence is Deoxyuridine 5'-triphosphate nucleotidohydrolase (151 aa).

Residue Arg-28 participates in Mg(2+) binding. Residues 72–74 (PRS), 86–89 (GVID), Tyr-92, Gly-97, Ile-99, and Arg-115 each bind dUTP.

This sequence belongs to the dUTPase family. Requires Mg(2+) as cofactor.

The enzyme catalyses dUTP + H2O = dUMP + diphosphate + H(+). This enzyme is involved in nucleotide metabolism: it produces dUMP, the immediate precursor of thymidine nucleotides and it decreases the intracellular concentration of dUTP so that uracil cannot be incorporated into DNA. The protein is Deoxyuridine 5'-triphosphate nucleotidohydrolase (OPG046) of Monkeypox virus.